The sequence spans 124 residues: Small ribosomal subunit protein uS12 (124 aa).

At Asp-89 the chain carries 3-methylthioaspartic acid. Positions 103–124 (DTAGVKDRRQSRSKYGAKSPKE) are disordered.

This sequence belongs to the universal ribosomal protein uS12 family. In terms of assembly, part of the 30S ribosomal subunit. Contacts proteins S8 and S17. May interact with IF1 in the 30S initiation complex.

Its function is as follows. With S4 and S5 plays an important role in translational accuracy. Interacts with and stabilizes bases of the 16S rRNA that are involved in tRNA selection in the A site and with the mRNA backbone. Located at the interface of the 30S and 50S subunits, it traverses the body of the 30S subunit contacting proteins on the other side and probably holding the rRNA structure together. The combined cluster of proteins S8, S12 and S17 appears to hold together the shoulder and platform of the 30S subunit. The protein is Small ribosomal subunit protein uS12 of Prochlorococcus marinus (strain NATL2A).